Consider the following 498-residue polypeptide: ATP synthase subunit beta, chloroplastic (498 aa).

Position 172–179 (172–179 (GGAGVGKT)) interacts with ATP.

This sequence belongs to the ATPase alpha/beta chains family. F-type ATPases have 2 components, CF(1) - the catalytic core - and CF(0) - the membrane proton channel. CF(1) has five subunits: alpha(3), beta(3), gamma(1), delta(1), epsilon(1). CF(0) has four main subunits: a(1), b(1), b'(1) and c(9-12).

The protein resides in the plastid. Its subcellular location is the chloroplast thylakoid membrane. The enzyme catalyses ATP + H2O + 4 H(+)(in) = ADP + phosphate + 5 H(+)(out). Produces ATP from ADP in the presence of a proton gradient across the membrane. The catalytic sites are hosted primarily by the beta subunits. This is ATP synthase subunit beta, chloroplastic from Aristolochia macrophylla (Dutchman's pipe vine).